The following is a 267-amino-acid chain: Indole-3-glycerol phosphate synthase (267 aa).

This sequence belongs to the TrpC family.

It carries out the reaction 1-(2-carboxyphenylamino)-1-deoxy-D-ribulose 5-phosphate + H(+) = (1S,2R)-1-C-(indol-3-yl)glycerol 3-phosphate + CO2 + H2O. It participates in amino-acid biosynthesis; L-tryptophan biosynthesis; L-tryptophan from chorismate: step 4/5. This is Indole-3-glycerol phosphate synthase from Cupriavidus taiwanensis (strain DSM 17343 / BCRC 17206 / CCUG 44338 / CIP 107171 / LMG 19424 / R1) (Ralstonia taiwanensis (strain LMG 19424)).